A 93-amino-acid chain; its full sequence is Large ribosomal subunit protein uL23 (93 aa).

This sequence belongs to the universal ribosomal protein uL23 family. As to quaternary structure, part of the 50S ribosomal subunit. Contacts protein L29, and trigger factor when it is bound to the ribosome.

Functionally, one of the early assembly proteins it binds 23S rRNA. One of the proteins that surrounds the polypeptide exit tunnel on the outside of the ribosome. Forms the main docking site for trigger factor binding to the ribosome. The sequence is that of Large ribosomal subunit protein uL23 from Helicobacter pylori (strain P12).